A 98-amino-acid chain; its full sequence is Co-chaperonin GroES 4 (98 aa).

This sequence belongs to the GroES chaperonin family. In terms of assembly, heptamer of 7 subunits arranged in a ring. Interacts with the chaperonin GroEL.

The protein resides in the cytoplasm. Functionally, together with the chaperonin GroEL, plays an essential role in assisting protein folding. The GroEL-GroES system forms a nano-cage that allows encapsulation of the non-native substrate proteins and provides a physical environment optimized to promote and accelerate protein folding. GroES binds to the apical surface of the GroEL ring, thereby capping the opening of the GroEL channel. The chain is Co-chaperonin GroES 4 from Mesorhizobium japonicum (strain LMG 29417 / CECT 9101 / MAFF 303099) (Mesorhizobium loti (strain MAFF 303099)).